The chain runs to 274 residues: 3-methyl-2-oxobutanoate hydroxymethyltransferase (274 aa).

Residues D44 and D83 each coordinate Mg(2+). 3-methyl-2-oxobutanoate is bound by residues 44 to 45 (DS), D83, and K113. Mg(2+) is bound at residue E115. E182 functions as the Proton acceptor in the catalytic mechanism.

This sequence belongs to the PanB family. In terms of assembly, homodecamer; pentamer of dimers. Requires Mg(2+) as cofactor.

Its subcellular location is the cytoplasm. The catalysed reaction is 3-methyl-2-oxobutanoate + (6R)-5,10-methylene-5,6,7,8-tetrahydrofolate + H2O = 2-dehydropantoate + (6S)-5,6,7,8-tetrahydrofolate. It participates in cofactor biosynthesis; (R)-pantothenate biosynthesis; (R)-pantoate from 3-methyl-2-oxobutanoate: step 1/2. Its function is as follows. Catalyzes the reversible reaction in which hydroxymethyl group from 5,10-methylenetetrahydrofolate is transferred onto alpha-ketoisovalerate to form ketopantoate. The chain is 3-methyl-2-oxobutanoate hydroxymethyltransferase from Campylobacter jejuni subsp. jejuni serotype O:6 (strain 81116 / NCTC 11828).